Reading from the N-terminus, the 205-residue chain is Probable inactive peroxygenase-like protein (205 aa).

The Proline-knot motif lies at 79–88 (PVQLFGYILP). Residue S183 is modified to Phosphoserine.

Belongs to the caleosin family.

It is found in the lipid droplet. This chain is Probable inactive peroxygenase-like protein, found in Arabidopsis thaliana (Mouse-ear cress).